The chain runs to 180 residues: Translation initiation factor IF-3 (180 aa).

Belongs to the IF-3 family. Monomer.

It is found in the cytoplasm. Functionally, IF-3 binds to the 30S ribosomal subunit and shifts the equilibrium between 70S ribosomes and their 50S and 30S subunits in favor of the free subunits, thus enhancing the availability of 30S subunits on which protein synthesis initiation begins. The sequence is that of Translation initiation factor IF-3 from Pasteurella multocida (strain Pm70).